We begin with the raw amino-acid sequence, 533 residues long: NAD(P)H-quinone oxidoreductase chain 4 (533 aa).

15 helical membrane passes run 5–25, 36–56, 70–90, 91–111, 115–135, 137–157, 169–189, 210–230, 244–264, 278–298, 315–335, 336–356, 377–397, 418–438, and 465–485; these read VPWL…VPLV, WYAL…YLTG, VSWL…LSMP, LILL…PVSF, LFYF…AVQD, LLFF…LAIW, FILY…AMGF, GFQL…LPIV, TAPV…YALL, FAPL…LTSF, MGFV…GAML, QMIS…ATYD, FALW…SGFV, VVIC…LLSM, and VYII…PKLM.

It belongs to the complex I subunit 4 family.

The protein localises to the cellular thylakoid membrane. It catalyses the reaction a plastoquinone + NADH + (n+1) H(+)(in) = a plastoquinol + NAD(+) + n H(+)(out). It carries out the reaction a plastoquinone + NADPH + (n+1) H(+)(in) = a plastoquinol + NADP(+) + n H(+)(out). Its function is as follows. NDH-1 shuttles electrons from NAD(P)H, via FMN and iron-sulfur (Fe-S) centers, to quinones in the respiratory chain. The immediate electron acceptor for the enzyme in this species is believed to be plastoquinone. Couples the redox reaction to proton translocation (for every two electrons transferred, four hydrogen ions are translocated across the cytoplasmic membrane), and thus conserves the redox energy in a proton gradient. This is NAD(P)H-quinone oxidoreductase chain 4 from Synechococcus sp. (strain CC9605).